Reading from the N-terminus, the 151-residue chain is Transmembrane protein 239 (151 aa).

The next 3 membrane-spanning stretches (helical) occupy residues 61–81 (LWGL…HALF), 85–105 (SYLL…LLPA), and 116–138 (ALLF…GLLT).

It is found in the membrane. The chain is Transmembrane protein 239 (Tmem239) from Mus musculus (Mouse).